A 648-amino-acid polypeptide reads, in one-letter code: Bifunctional lysine-specific demethylase and histidyl-hydroxylase NO66 (648 aa).

Residues 1–168 (MSKVSSIFDT…KGAKAAKKNK (168 aa)) form a disordered region. Positions 17–28 (PATTENGAAAKP) are enriched in low complexity. The segment covering 109–119 (DHRKHKEKLRK) has biased composition (basic residues). The span at 123–137 (GVENSRQAAASTSML) shows a compositional bias: polar residues. The segment covering 155–168 (PVHHKGAKAAKKNK) has biased composition (basic residues). The JmjC domain occupies 308–453 (CSIRMLNPQT…DLLELYLPHA (146 aa)). H354, D356, and H419 together coordinate Fe cation.

It belongs to the ROX family. NO66 subfamily. The cofactor is Fe(2+).

The protein resides in the nucleus. The enzyme catalyses N(6),N(6)-dimethyl-L-lysyl(36)-[histone H3] + 2 2-oxoglutarate + 2 O2 = L-lysyl(36)-[histone H3] + 2 formaldehyde + 2 succinate + 2 CO2. Its function is as follows. Oxygenase that can act as both a histone lysine demethylase and a ribosomal histidine hydroxylase. Specifically demethylates 'Lys-4' (H3K4me) and 'Lys-36' (H3K36me) of histone H3, thereby playing a central role in histone code. The protein is Bifunctional lysine-specific demethylase and histidyl-hydroxylase NO66 of Culex quinquefasciatus (Southern house mosquito).